Here is a 245-residue protein sequence, read N- to C-terminus: PF03932 family protein CutC (245 aa).

It belongs to the CutC family.

It is found in the cytoplasm. The chain is PF03932 family protein CutC from Photobacterium profundum (strain SS9).